The sequence spans 134 residues: Small ribosomal subunit protein uS8c (134 aa).

It belongs to the universal ribosomal protein uS8 family. As to quaternary structure, part of the 30S ribosomal subunit.

Its subcellular location is the plastid. It is found in the chloroplast. One of the primary rRNA binding proteins, it binds directly to 16S rRNA central domain where it helps coordinate assembly of the platform of the 30S subunit. The sequence is that of Small ribosomal subunit protein uS8c (rps8) from Eucalyptus globulus subsp. globulus (Tasmanian blue gum).